The chain runs to 234 residues: Large ribosomal subunit protein uL1 (234 aa).

The protein belongs to the universal ribosomal protein uL1 family. Part of the 50S ribosomal subunit.

Binds directly to 23S rRNA. The L1 stalk is quite mobile in the ribosome, and is involved in E site tRNA release. In terms of biological role, protein L1 is also a translational repressor protein, it controls the translation of the L11 operon by binding to its mRNA. The chain is Large ribosomal subunit protein uL1 from Salmonella gallinarum (strain 287/91 / NCTC 13346).